Reading from the N-terminus, the 261-residue chain is Phosphate import ATP-binding protein PstB 4 (261 aa).

The ABC transporter domain maps to 8 to 256; it reads IKVNNLSFYY…PHDSRTREYV (249 aa). 40-47 contributes to the ATP binding site; the sequence is GPSGCGKS.

It belongs to the ABC transporter superfamily. Phosphate importer (TC 3.A.1.7) family. In terms of assembly, the complex is composed of two ATP-binding proteins (PstB), two transmembrane proteins (PstC and PstA) and a solute-binding protein (PstS).

The protein localises to the cell inner membrane. It catalyses the reaction phosphate(out) + ATP + H2O = ADP + 2 phosphate(in) + H(+). Part of the ABC transporter complex PstSACB involved in phosphate import. Responsible for energy coupling to the transport system. The protein is Phosphate import ATP-binding protein PstB 4 of Trichormus variabilis (strain ATCC 29413 / PCC 7937) (Anabaena variabilis).